The primary structure comprises 240 residues: FAS1 domain-containing protein AN1527 (240 aa).

The first 24 residues, 1–24 (MRQLSTTALVLFLFFYCSISTAWS), serve as a signal peptide directing secretion. One can recognise an FAS1 domain in the interval 91–239 (EPTISDVLPK…GEVWVIDGVI (149 aa)).

The protein resides in the vacuole. This is FAS1 domain-containing protein AN1527 from Emericella nidulans (strain FGSC A4 / ATCC 38163 / CBS 112.46 / NRRL 194 / M139) (Aspergillus nidulans).